We begin with the raw amino-acid sequence, 591 residues long: Serine/threonine-protein kinase PAK 4 (591 aa).

Residues 11–24 form the CRIB domain; the sequence is ISAPSNFEHRVHTG. The interval 25 to 320 is linker; sequence FDQHEQKFTG…VVDPGDPRSY (296 aa). At Ser-41 the chain carries Phosphoserine. Position 78 is an N6-methyllysine (Lys-78). Residues 95–301 are disordered; the sequence is TRSNSLRRDS…PQREPQRVSH (207 aa). Phosphoserine occurs at positions 104 and 148. Residues 149–164 are compositionally biased toward basic and acidic residues; that stretch reads GDRRRAGPEKRPKSSR. Phosphoserine is present on residues Ser-167 and Ser-181. A Phosphothreonine modification is found at Thr-187. Residues 191 to 202 are compositionally biased toward low complexity; sequence AGLASGAKLAAG. Ser-195 carries the phosphoserine modification. Thr-207 carries the post-translational modification Phosphothreonine. Low complexity predominate over residues 242–260; that stretch reads SSSSSSRPPTRARGAPSPG. Phosphoserine is present on residues Ser-258 and Ser-267. The span at 271 to 290 shows a compositional bias: pro residues; it reads LAPPACTPAAPAVPGPPGPR. Ser-291 is modified (phosphoserine). A compositionally biased stretch (basic and acidic residues) spans 292-301; sequence PQREPQRVSH. Residues 298 to 323 form a GEF-interaction domain (GID) region; it reads RVSHEQFRAALQLVVDPGDPRSYLDN. The region spanning 321–572 is the Protein kinase domain; the sequence is LDNFIKIGEG…AAELLKHPFL (252 aa). ATP contacts are provided by residues 327 to 335, Lys-350, and 396 to 398; these read IGEGSTGIV and EFL. Catalysis depends on Asp-440, which acts as the Proton acceptor. 458-460 contacts ATP; the sequence is DFG. Ser-474 is modified (phosphoserine; by autocatalysis).

Belongs to the protein kinase superfamily. STE Ser/Thr protein kinase family. STE20 subfamily. Interacts with FGFR2 and GRB2. Interacts tightly with GTP-bound but not GDP-bound CDC42/p21 and weakly with RAC1. Interacts with INKA1. Interacts with SH3RF2. Interacts with RHOU and PAXI; the PAK4-RHOU complex protects RHOU from ubiquitination and acts as a scaffold to suppport paxillin/PAXI phosphorylation. Autophosphorylated on serine residues when activated by CDC42/p21. Phosphorylated on tyrosine residues upon stimulation of FGFR2. Methylated by SETD6. In terms of processing, polyubiquitinated, leading to its proteasomal degradation. As to expression, highest expression in prostate, testis and colon.

It localises to the cytoplasm. It catalyses the reaction L-seryl-[protein] + ATP = O-phospho-L-seryl-[protein] + ADP + H(+). The enzyme catalyses L-threonyl-[protein] + ATP = O-phospho-L-threonyl-[protein] + ADP + H(+). Inhibited by INKA1; which inhibits the serine/threonine-protein kinase activity by binding PAK4 in a substrate-like manner. Functionally, serine/threonine-protein kinase that plays a role in a variety of different signaling pathways including cytoskeleton regulation, cell adhesion turnover, cell migration, growth, proliferation or cell survival. Activation by various effectors including growth factor receptors or active CDC42 and RAC1 results in a conformational change and a subsequent autophosphorylation on several serine and/or threonine residues. Phosphorylates and inactivates the protein phosphatase SSH1, leading to increased inhibitory phosphorylation of the actin binding/depolymerizing factor cofilin. Decreased cofilin activity may lead to stabilization of actin filaments. Phosphorylates LIMK1, a kinase that also inhibits the activity of cofilin. Phosphorylates integrin beta5/ITGB5 and thus regulates cell motility. Phosphorylates ARHGEF2 and activates the downstream target RHOA that plays a role in the regulation of assembly of focal adhesions and actin stress fibers. Stimulates cell survival by phosphorylating the BCL2 antagonist of cell death BAD. Alternatively, inhibits apoptosis by preventing caspase-8 binding to death domain receptors in a kinase independent manner. Plays a role in cell-cycle progression by controlling levels of the cell-cycle regulatory protein CDKN1A and by phosphorylating RAN. Promotes kinase-independent stabilization of RHOU, thereby contributing to focal adhesion disassembly during cell migration. The chain is Serine/threonine-protein kinase PAK 4 from Homo sapiens (Human).